The chain runs to 279 residues: 3-methyl-2-oxobutanoate hydroxymethyltransferase (279 aa).

Residues aspartate 44 and aspartate 83 each contribute to the Mg(2+) site. Residues 44–45 (DS), aspartate 83, and lysine 113 contribute to the 3-methyl-2-oxobutanoate site. Glutamate 115 is a binding site for Mg(2+). Glutamate 182 (proton acceptor) is an active-site residue.

This sequence belongs to the PanB family. Homodecamer; pentamer of dimers. The cofactor is Mg(2+).

It localises to the cytoplasm. The catalysed reaction is 3-methyl-2-oxobutanoate + (6R)-5,10-methylene-5,6,7,8-tetrahydrofolate + H2O = 2-dehydropantoate + (6S)-5,6,7,8-tetrahydrofolate. It functions in the pathway cofactor biosynthesis; (R)-pantothenate biosynthesis; (R)-pantoate from 3-methyl-2-oxobutanoate: step 1/2. Functionally, catalyzes the reversible reaction in which hydroxymethyl group from 5,10-methylenetetrahydrofolate is transferred onto alpha-ketoisovalerate to form ketopantoate. This is 3-methyl-2-oxobutanoate hydroxymethyltransferase from Dehalococcoides mccartyi (strain ATCC BAA-2100 / JCM 16839 / KCTC 5957 / BAV1).